The following is a 626-amino-acid chain: Nuclear RNA export factor 1 (626 aa).

Residues 1–16 (MADEGKSYSEHDDERV) show a composition bias toward basic and acidic residues. Positions 1–85 (MADEGKSYSE…TTRPNRRGDA (85 aa)) are disordered. At alanine 2 the chain carries N-acetylalanine. Residues 2–60 (ADEGKSYSEHDDERVNFPQRKKKGRGPFRWKYGEGNRRSGRGGSGIRSSRLEEDDGDVA) are minor non-specific RNA-binding. The tract at residues 2 to 118 (ADEGKSYSEH…GTSQDGTSKN (117 aa)) is RNA-binding (RBD). The segment at 2–198 (ADEGKSYSEH…IIINPSAPPH (197 aa)) is interaction with ALYREF/THOC4 and LUZP4. Phosphoserine is present on serine 9. Residues 20 to 29 (QRKKKGRGPF) are compositionally biased toward basic residues. Residue arginine 42 is modified to Asymmetric dimethylarginine; alternate. Omega-N-methylarginine; alternate is present on arginine 42. Positions 61-118 (MSDAQDGPRVRYNPYTTRPNRRGDAWHDRDRIHVTVRRDRAPPERGGAGTSQDGTSKN) are major non-specific RNA-binding. The tract at residues 61 to 118 (MSDAQDGPRVRYNPYTTRPNRRGDAWHDRDRIHVTVRRDRAPPERGGAGTSQDGTSKN) is RNA binding. Residues 67 to 100 (GPRVRYNPYTTRPNRRGDAWHDRDRIHVTVRRDR) carry the Nuclear localization signal motif. The short motif at 83–110 (GDAWHDRDRIHVTVRRDRAPPERGGAGT) is the Nuclear export signal element. The 80-residue stretch at 119-198 (WFKITIPYGR…IIINPSAPPH (80 aa)) folds into the RRM domain. A 3'-nitrotyrosine modification is found at tyrosine 126. LRR repeat units follow at residues 266 to 291 (ELLS…QKVP), 292 to 315 (NLKI…IKGL), 316 to 350 (KLEE…AIRE), and 351 to 378 (RFPK…TTLP). Positions 393–543 (LVLHFLQQYY…LCIVNDELFV (151 aa)) constitute an NTF2 domain. Positions 572–626 (PEQQEMLQAFSTQSGMNLEWSQKCLQDNNWDYTRSAQAFTHLKAKGEIPEVAFMK) constitute a TAP-C domain.

Belongs to the NXF family. In terms of assembly, heterodimer (via NTF2 domain) with NXT1. The formation of NXF1-NXT1 heterodimers is required for the NXF1-mediated nuclear mRNA export. Forms a complex with RANBP2/NUP358, NXT1 and RANGAP1. Associates with the exon junction complex (EJC) and with the transcription/export (TREX) complex. Found in a mRNA complex with UPF3A and UPF3B. Found in a post-splicing complex with RBM8A, UPF1, UPF2, UPF3A, UPF3B and RNPS1. Interacts (via N-terminus) with DHX9 (via N-terminus); this interaction is direct and negatively regulates NXF1-mediated nuclear export of constitutive transport element (CTE)-containing cellular mRNAs. Interacts with ALYREF/THOC4. Interacts with FYTTD1/UIF. Interacts with EIF4A3. Interacts with NUPL2. Interacts with THOC5. Interacts with CHTOP. Interacts with FRG1 (via N-terminus). Interacts with LUZP4. Interacts with FMR1; the interaction occurs in a mRNA-dependent and polyribosomes-independent manner in the nucleus. Interacts with CPSF6 (via N-terminus); this interaction is direct. Interacts with RBM15. Interacts with RBM15B. Interacts with MCM3AP; this interaction is not mediated by RNA.

The protein resides in the nucleus. Its subcellular location is the nucleoplasm. It localises to the nucleus speckle. It is found in the cytoplasm. Its function is as follows. Involved in the nuclear export of mRNA species bearing retroviral constitutive transport elements (CTE) and in the export of mRNA from the nucleus to the cytoplasm (TAP/NFX1 pathway). The NXF1-NXT1 heterodimer is involved in the export of HSP70 mRNA in conjunction with ALYREF/THOC4 and THOC5 components of the TREX complex. ALYREF/THOC4-bound mRNA is thought to be transferred to the NXF1-NXT1 heterodimer for export. Also involved in nuclear export of m6A-containing mRNAs: interaction between SRSF3 and YTHDC1 facilitates m6A-containing mRNA-binding to both SRSF3 and NXF1, promoting mRNA nuclear export. The sequence is that of Nuclear RNA export factor 1 (NXF1) from Pongo abelii (Sumatran orangutan).